Consider the following 375-residue polypeptide: Chaperone protein DnaJ (375 aa).

In terms of domain architecture, J spans 4-68 (DYYETLGVDR…ETRARYDQFG (65 aa)). The CR-type zinc finger occupies 134 to 216 (GGEKEIRIPH…CGGAGRKQET (83 aa)). 8 residues coordinate Zn(2+): Cys147, Cys150, Cys164, Cys167, Cys190, Cys193, Cys204, and Cys207. CXXCXGXG motif repeat units lie at residues 147–154 (CQVCNGSG), 164–171 (CSTCNGAG), 190–197 (CPDCNGAG), and 204–211 (CDACGGAG).

The protein belongs to the DnaJ family. As to quaternary structure, homodimer. The cofactor is Zn(2+).

It localises to the cytoplasm. Participates actively in the response to hyperosmotic and heat shock by preventing the aggregation of stress-denatured proteins and by disaggregating proteins, also in an autonomous, DnaK-independent fashion. Unfolded proteins bind initially to DnaJ; upon interaction with the DnaJ-bound protein, DnaK hydrolyzes its bound ATP, resulting in the formation of a stable complex. GrpE releases ADP from DnaK; ATP binding to DnaK triggers the release of the substrate protein, thus completing the reaction cycle. Several rounds of ATP-dependent interactions between DnaJ, DnaK and GrpE are required for fully efficient folding. Also involved, together with DnaK and GrpE, in the DNA replication of plasmids through activation of initiation proteins. The protein is Chaperone protein DnaJ of Rippkaea orientalis (strain PCC 8801 / RF-1) (Cyanothece sp. (strain PCC 8801)).